A 107-amino-acid chain; its full sequence is Replication initiation control protein YabA (107 aa).

Zn(2+) contacts are provided by His-81, Cys-83, Cys-97, and Cys-100.

The protein belongs to the YabA family. Homotetramer. Interacts with both DnaA and DnaN, acting as a bridge between these two proteins. It depends on Zn(2+) as a cofactor.

Its subcellular location is the cytoplasm. The protein localises to the nucleoid. Functionally, involved in control of chromosome replication initiation. Inhibits the cooperative binding of DnaA to the oriC region, thus negatively regulating initiation of chromosome replication. Inhibits the ability of DnaA-ATP to form a helix on DNA; does not disassemble preformed DnaA-DNA helices. Decreases the residence time of DnaA on the chromosome at its binding sites (oriC, replication forks and promoter-binding sites). Tethers DnaA to the replication machinery via the DNA polymerase beta sliding clamp subunit (dnaN). Associates with oriC and other DnaA targets on the chromosome in a DnaA-dependent manner. In Streptococcus pyogenes serotype M1, this protein is Replication initiation control protein YabA.